Here is a 466-residue protein sequence, read N- to C-terminus: Ornithine decarboxylase (466 aa).

Lys116 is subject to N6-(pyridoxal phosphate)lysine. Residues Ser247, Gly286, and 318–321 each bind pyridoxal 5'-phosphate; that span reads EPGR. 362 to 363 serves as a coordination point for substrate; sequence FD. Cys411 functions as the Proton donor; shared with dimeric partner in the catalytic mechanism. Asp412 contacts substrate. Tyr441 contacts pyridoxal 5'-phosphate.

This sequence belongs to the Orn/Lys/Arg decarboxylase class-II family. Homodimer. Only the dimer is catalytically active, as the active sites are constructed of residues from both monomers. Pyridoxal 5'-phosphate serves as cofactor.

The protein resides in the cytoplasm. It catalyses the reaction L-ornithine + H(+) = putrescine + CO2. It participates in amine and polyamine biosynthesis; putrescine biosynthesis via L-ornithine pathway; putrescine from L-ornithine: step 1/1. Inhibited by antizyme (AZ) OAZ1 in response to polyamine levels. AZ inhibits the assembly of the functional homodimer by binding to ODC monomers and targeting them for ubiquitin-independent proteolytic destruction by the 26S proteasome. Catalyzes the first and rate-limiting step of polyamine biosynthesis that converts ornithine into putrescine, which is the precursor for the polyamines, spermidine and spermine. Polyamines are essential for cell proliferation and are implicated in cellular processes, ranging from DNA replication to apoptosis. The polypeptide is Ornithine decarboxylase (Saccharomyces cerevisiae (strain ATCC 204508 / S288c) (Baker's yeast)).